We begin with the raw amino-acid sequence, 127 residues long: Cuticle protein 4 (127 aa).

Glutamine 1 bears the Pyrrolidone carboxylic acid mark. Repeat copies occupy residues proline 31–isoleucine 39 and proline 84–isoleucine 92.

This Blaberus craniifer (Death's head cockroach) protein is Cuticle protein 4.